The chain runs to 698 residues: RNA cytosine-C(5)-methyltransferase NSUN2 (698 aa).

A compositionally biased stretch (basic residues) spans 1–10 (MGRKNRRNRQ). The disordered stretch occupies residues 1–28 (MGRKNRRNRQRRTEQRSPAEEERRKARE). Residues 11 to 28 (RRTEQRSPAEEERRKARE) show a composition bias toward basic and acidic residues. Residues 182 to 188 (CAAPGSK), D213, D240, and D266 contribute to the S-adenosyl-L-methionine site. C319 serves as the catalytic Nucleophile. The interval 472-496 (AVDAENGETKPCTNQSGSSKTDSVC) is disordered. Residues 482 to 493 (PCTNQSGSSKTD) show a composition bias toward polar residues.

This sequence belongs to the class I-like SAM-binding methyltransferase superfamily. RsmB/NOP family. TRM4 subfamily.

It localises to the nucleus. Its subcellular location is the nucleolus. The protein localises to the cytoplasm. It is found in the mitochondrion. The protein resides in the cytoskeleton. It localises to the spindle. Its subcellular location is the secreted. The protein localises to the extracellular exosome. The catalysed reaction is cytidine(48) in tRNA + S-adenosyl-L-methionine = 5-methylcytidine(48) in tRNA + S-adenosyl-L-homocysteine + H(+). It carries out the reaction cytidine(49) in tRNA + S-adenosyl-L-methionine = 5-methylcytidine(49) in tRNA + S-adenosyl-L-homocysteine + H(+). It catalyses the reaction cytidine(50) in tRNA + S-adenosyl-L-methionine = 5-methylcytidine(50) in tRNA + S-adenosyl-L-homocysteine + H(+). The enzyme catalyses cytidine(34) in tRNA precursor + S-adenosyl-L-methionine = 5-methylcytidine(34) in tRNA precursor + S-adenosyl-L-homocysteine + H(+). The catalysed reaction is a cytidine in mRNA + S-adenosyl-L-methionine = a 5-methylcytidine in mRNA + S-adenosyl-L-homocysteine + H(+). RNA cytosine C(5)-methyltransferase that methylates cytosine to 5-methylcytosine (m5C) in various RNAs, such as tRNAs, mRNAs and some long non-coding RNAs (lncRNAs). Involved in various processes, such as epidermal stem cell differentiation, testis differentiation and maternal to zygotic transition during early development: acts by increasing protein synthesis; cytosine C(5)-methylation promoting tRNA stability and preventing mRNA decay. Methylates cytosine to 5-methylcytosine (m5C) at positions 34 and 48 of intron-containing tRNA(Leu)(CAA) precursors, and at positions 48, 49 and 50 of tRNA(Gly)(GCC) precursors. tRNA methylation is required generation of RNA fragments derived from tRNAs (tRFs). Also mediates C(5)-methylation of mitochondrial tRNAs. Catalyzes cytosine C(5)-methylation of mRNAs, leading to stabilize them and prevent mRNA decay. Cytosine C(5)-methylation of mRNAs also regulates mRNA export. Also mediates cytosine C(5)-methylation of non-coding RNAs, such as vault RNAs (vtRNAs), promoting their processing into regulatory small RNAs. Required for proper spindle assembly and chromosome segregation, independently of its methyltransferase activity. The sequence is that of RNA cytosine-C(5)-methyltransferase NSUN2 from Xenopus laevis (African clawed frog).